A 352-amino-acid chain; its full sequence is UDP-N-acetylglucosamine--N-acetylmuramyl-(pentapeptide) pyrophosphoryl-undecaprenol N-acetylglucosamine transferase (352 aa).

UDP-N-acetyl-alpha-D-glucosamine is bound by residues 14–16 (TGG), N124, R164, S185, and Q285.

This sequence belongs to the glycosyltransferase 28 family. MurG subfamily.

The protein resides in the cell inner membrane. It catalyses the reaction di-trans,octa-cis-undecaprenyl diphospho-N-acetyl-alpha-D-muramoyl-L-alanyl-D-glutamyl-meso-2,6-diaminopimeloyl-D-alanyl-D-alanine + UDP-N-acetyl-alpha-D-glucosamine = di-trans,octa-cis-undecaprenyl diphospho-[N-acetyl-alpha-D-glucosaminyl-(1-&gt;4)]-N-acetyl-alpha-D-muramoyl-L-alanyl-D-glutamyl-meso-2,6-diaminopimeloyl-D-alanyl-D-alanine + UDP + H(+). It participates in cell wall biogenesis; peptidoglycan biosynthesis. Its function is as follows. Cell wall formation. Catalyzes the transfer of a GlcNAc subunit on undecaprenyl-pyrophosphoryl-MurNAc-pentapeptide (lipid intermediate I) to form undecaprenyl-pyrophosphoryl-MurNAc-(pentapeptide)GlcNAc (lipid intermediate II). The polypeptide is UDP-N-acetylglucosamine--N-acetylmuramyl-(pentapeptide) pyrophosphoryl-undecaprenol N-acetylglucosamine transferase (Chlamydia trachomatis serovar L2 (strain ATCC VR-902B / DSM 19102 / 434/Bu)).